A 40-amino-acid chain; its full sequence is Submaxillary gland androgen-regulated protein 2, isoform epsilon (40 aa).

The first 20 residues, 1–20 (MKALYMVFVLWVLIGCFLRC), serve as a signal peptide directing secretion.

It localises to the secreted. May play a role in protection or detoxification. In Mus musculus (Mouse), this protein is Submaxillary gland androgen-regulated protein 2, isoform epsilon (Smr2).